The following is a 289-amino-acid chain: uncharacterized protein (289 aa).

Residues 1 to 58 (MDEKDWILLKILHEEQSVTKTAERLFTSQPSITYRLKKIEEIFGIELFTKRHKGITFT) enclose the HTH lysR-type domain. Positions 18-37 (VTKTAERLFTSQPSITYRLK) form a DNA-binding region, H-T-H motif.

Belongs to the LysR transcriptional regulatory family.

This is an uncharacterized protein from Bacillus subtilis (strain 168).